A 155-amino-acid chain; its full sequence is Snaclec bothrojaracin subunit alpha (155 aa).

Positions 1-23 are cleaved as a signal peptide; sequence MGRFLFVSFGLLVVFLSLSGTAA. Disulfide bonds link cysteine 25–cysteine 36, cysteine 53–cysteine 150, and cysteine 125–cysteine 142. One can recognise a C-type lectin domain in the interval 32–151; the sequence is HEGHCYKFFQ…CGQQNPFVCK (120 aa).

This sequence belongs to the snaclec family. As to quaternary structure, heterodimer of subunits alpha and beta; disulfide-linked. Expressed by the venom gland.

It localises to the secreted. This potent antithrombotic agent acts in a calcium-independent manner. Exerts its anticoagulant effect by two distinct mechanisms. It binds to activated thrombin through exosite 1, blocking fibrinogen clotting, platelet activation, factor V activation and other effects, and it interacts with prothrombin (F2), decreasing its proteolytic activation -especially in the presence of factor Va. In vivo, intravenous injection before thrombosis induction causes a significant decrease in thrombus weight. Furthermore, BJC shows a prolonged effect by remaining in the plasma bound to prothrombin for at least 12 hours. The protein is Snaclec bothrojaracin subunit alpha of Bothrops jararaca (Jararaca).